Reading from the N-terminus, the 179-residue chain is Large ribosomal subunit protein uL5 (179 aa).

This sequence belongs to the universal ribosomal protein uL5 family. As to quaternary structure, part of the 50S ribosomal subunit; part of the 5S rRNA/L5/L18/L25 subcomplex. Contacts the 5S rRNA and the P site tRNA. Forms a bridge to the 30S subunit in the 70S ribosome.

This is one of the proteins that bind and probably mediate the attachment of the 5S RNA into the large ribosomal subunit, where it forms part of the central protuberance. In the 70S ribosome it contacts protein S13 of the 30S subunit (bridge B1b), connecting the 2 subunits; this bridge is implicated in subunit movement. Contacts the P site tRNA; the 5S rRNA and some of its associated proteins might help stabilize positioning of ribosome-bound tRNAs. This chain is Large ribosomal subunit protein uL5, found in Pseudoalteromonas translucida (strain TAC 125).